The sequence spans 552 residues: Rhodopsin kinase GRK7 (552 aa).

The residue at position 36 (S36) is a Phosphoserine; by PKA. The region spanning 56-176 is the RGS domain; sequence FHSLCEQQPI…LASPFYDKFL (121 aa). The 264-residue stretch at 191–454 folds into the Protein kinase domain; sequence FEEFRVLGKG…SDDPRKHHFF (264 aa). ATP-binding positions include 197-205 and K220; that span reads LGKGGFGEV. D316 acts as the Proton acceptor in catalysis. The AGC-kinase C-terminal domain occupies 455 to 520; it reads KTINFPRLEA…GAVPIAWQEE (66 aa). A Cysteine methyl ester modification is found at C549. The S-geranylgeranyl cysteine moiety is linked to residue C549. A propeptide spans 550-552 (removed in mature form); sequence LLL.

Belongs to the protein kinase superfamily. AGC Ser/Thr protein kinase family. GPRK subfamily. In terms of assembly, interacts (when prenylated) with PDE6D; this promotes release from membranes. Autophosphorylated in vitro at Ser-490. Phosphorylation at Ser-36 is regulated by light and activated by cAMP.

It localises to the membrane. It catalyses the reaction L-threonyl-[rhodopsin] + ATP = O-phospho-L-threonyl-[rhodopsin] + ADP + H(+). The enzyme catalyses L-seryl-[rhodopsin] + ATP = O-phospho-L-seryl-[rhodopsin] + ADP + H(+). Its activity is regulated as follows. Inhibited by phosphorylation of Ser-36. Retina-specific kinase involved in the shutoff of the photoresponse and adaptation to changing light conditions via cone opsin phosphorylation, including rhodopsin (RHO). This chain is Rhodopsin kinase GRK7 (GRK7), found in Bos taurus (Bovine).